A 367-amino-acid polypeptide reads, in one-letter code: UDP-N-acetylglucosamine--N-acetylmuramyl-(pentapeptide) pyrophosphoryl-undecaprenol N-acetylglucosamine transferase (367 aa).

UDP-N-acetyl-alpha-D-glucosamine-binding positions include 11-13 (TAG), Asn-125, Arg-163, Ser-197, and Gln-289.

Belongs to the glycosyltransferase 28 family. MurG subfamily.

Its subcellular location is the cell membrane. It catalyses the reaction di-trans,octa-cis-undecaprenyl diphospho-N-acetyl-alpha-D-muramoyl-L-alanyl-D-glutamyl-meso-2,6-diaminopimeloyl-D-alanyl-D-alanine + UDP-N-acetyl-alpha-D-glucosamine = di-trans,octa-cis-undecaprenyl diphospho-[N-acetyl-alpha-D-glucosaminyl-(1-&gt;4)]-N-acetyl-alpha-D-muramoyl-L-alanyl-D-glutamyl-meso-2,6-diaminopimeloyl-D-alanyl-D-alanine + UDP + H(+). The protein operates within cell wall biogenesis; peptidoglycan biosynthesis. Functionally, cell wall formation. Catalyzes the transfer of a GlcNAc subunit on undecaprenyl-pyrophosphoryl-MurNAc-pentapeptide (lipid intermediate I) to form undecaprenyl-pyrophosphoryl-MurNAc-(pentapeptide)GlcNAc (lipid intermediate II). This chain is UDP-N-acetylglucosamine--N-acetylmuramyl-(pentapeptide) pyrophosphoryl-undecaprenol N-acetylglucosamine transferase, found in Clavibacter sepedonicus (Clavibacter michiganensis subsp. sepedonicus).